The sequence spans 125 residues: RxLR effector protein Avh6 (125 aa).

The N-terminal stretch at Met1–Ala25 is a signal peptide. The RxLR-dEER motif lies at Arg48–Arg70.

This sequence belongs to the RxLR effector family.

The protein resides in the secreted. It localises to the host cell. Effector that suppresses plant defense responses during the early stages of pathogen infection. Suppresses cell death induced by effectors and PAMPs in plant hosts. Triggers a hypersensitive response (HR) in the presence of Rps1d. Suppresses BAX-induced cell death and enhan,ced P.capsici infection in Nicotiana benthamiana. Also suppresses effector-triggered immunity induction by associating with Avr1b and Rps1b, suggesting a role in suppressing plant immunity. The sequence is that of RxLR effector protein Avh6 from Phytophthora sojae (strain P6497) (Soybean stem and root rot agent).